We begin with the raw amino-acid sequence, 272 residues long: Catabolic 3-dehydroquinate dehydratase (272 aa).

3-dehydroquinate-binding positions include 66–68 (EFR) and arginine 102. Catalysis depends on histidine 163, which acts as the Proton donor/acceptor. Lysine 190 acts as the Schiff-base intermediate with substrate in catalysis. Arginine 232, serine 251, and glutamine 255 together coordinate 3-dehydroquinate.

This sequence belongs to the type-I 3-dehydroquinase family.

The catalysed reaction is 3-dehydroquinate = 3-dehydroshikimate + H2O. The protein operates within aromatic compound metabolism; 3,4-dihydroxybenzoate biosynthesis; 3,4-dihydroxybenzoate from 3-dehydroquinate: step 1/2. In terms of biological role, involved in the biosynthesis of protocatechuate. Catalyzes the catabolic dehydration of 3-dehydroquinate (DHQ) to yield 3-dehydroshikimate. The chain is Catabolic 3-dehydroquinate dehydratase from Acinetobacter baylyi (strain ATCC 33305 / BD413 / ADP1).